The following is a 472-amino-acid chain: MMPRTIIEKIWDRHVVKSGEGKPDLLYIDLHLIHEVTSPQAFEGLRQKGRKVRRPQNTFATMDHNIPTVNRFDIKDEVAKRQVTALERNCEEFGVRLADLHSADQGIVHVVGPELGLTLPGKTIVCGDSHTSTHGAFGALAFGIGTSEVEHVLSTQTLWQQRPKTLEIRVDGTLQKGVTAKDVILSVIGKYGVKFGTGYVIEYTGEVFRNMSMDERMTVCNMSIEAGARAGLIAPDDTTIEYCKNRKYAPKGEEFEKAAAEWKALKTDPGAVYDHSIVLDGSEISPMVTWGVNPGMVLPVDAQIPAPETIDSEDGKKEAIRAYEYMGISPNQKIEDIKVEHVFIGSCTNSRMTDLRQAADMIKGRKVADSVRAIVVPGSQSVKQQAEEEGLHRVFLEAGFEWRESGCSMCLSMNNDVVPEGERCASTSNRNFEGRQGKGARTHLVSPAMAAMAAIHGHFVDVRKFYQEKTVV.

Cys-347, Cys-407, and Cys-410 together coordinate [4Fe-4S] cluster.

This sequence belongs to the aconitase/IPM isomerase family. LeuC type 1 subfamily. Heterodimer of LeuC and LeuD. Requires [4Fe-4S] cluster as cofactor.

It catalyses the reaction (2R,3S)-3-isopropylmalate = (2S)-2-isopropylmalate. The protein operates within amino-acid biosynthesis; L-leucine biosynthesis; L-leucine from 3-methyl-2-oxobutanoate: step 2/4. Functionally, catalyzes the isomerization between 2-isopropylmalate and 3-isopropylmalate, via the formation of 2-isopropylmaleate. The protein is 3-isopropylmalate dehydratase large subunit of Bacillus velezensis (strain DSM 23117 / BGSC 10A6 / LMG 26770 / FZB42) (Bacillus amyloliquefaciens subsp. plantarum).